We begin with the raw amino-acid sequence, 133 residues long: MTLNLSVLTPNRIVWDSEVEEIVLSTNSGQIGILSNHAPIATAVDIGILRIRLNDQWLTMALMGGFARIGNNEITVLVNDAEKGSDIDPQEAQQTLEIAEANVKKAEGRRQKIEANLALRRARTRVEAINPIS.

It belongs to the ATPase epsilon chain family. As to quaternary structure, F-type ATPases have 2 components, CF(1) - the catalytic core - and CF(0) - the membrane proton channel. CF(1) has five subunits: alpha(3), beta(3), gamma(1), delta(1), epsilon(1). CF(0) has three main subunits: a, b and c.

The protein localises to the plastid. The protein resides in the chloroplast thylakoid membrane. Functionally, produces ATP from ADP in the presence of a proton gradient across the membrane. This chain is ATP synthase epsilon chain, chloroplastic, found in Atropa belladonna (Belladonna).